Consider the following 132-residue polypeptide: Large ribosomal subunit protein bL17 (132 aa).

This sequence belongs to the bacterial ribosomal protein bL17 family. Part of the 50S ribosomal subunit. Contacts protein L32.

The chain is Large ribosomal subunit protein bL17 from Marinobacter nauticus (strain ATCC 700491 / DSM 11845 / VT8) (Marinobacter aquaeolei).